A 132-amino-acid polypeptide reads, in one-letter code: MNENIISNLNYFSEITQRTLSAFHFSGTDSTLEDEVEELKRFVSKNRFKKLIKIDILDDNRYCRHFSDGSKDIVDEEDINTKVAYDKNELFEVIDRALSKDISPIMSIKLSRNIQLVENKKIENPSEKIFFL.

The presence of the two linear plasmids, termed pGKL1 and pGKL2, in strains of Kluyveromyces lactis confers the killer phenotype to the host cell, by promoting the secretion of a toxin able to inhibit the growth of sensitive strains. This is an uncharacterized protein from Kluyveromyces lactis (strain ATCC 8585 / CBS 2359 / DSM 70799 / NBRC 1267 / NRRL Y-1140 / WM37) (Yeast).